A 329-amino-acid chain; its full sequence is Ribose-phosphate pyrophosphokinase B (329 aa).

Residues aspartate 131, histidine 133, and glutamate 146 each contribute to the Mg(2+) site. Residues 227–242 (TGKIAIIIDDIADTCK) are binding of phosphoribosylpyrophosphate.

Belongs to the ribose-phosphate pyrophosphokinase family. The cofactor is Mg(2+).

Its subcellular location is the cytoplasm. It catalyses the reaction D-ribose 5-phosphate + ATP = 5-phospho-alpha-D-ribose 1-diphosphate + AMP + H(+). The protein operates within metabolic intermediate biosynthesis; 5-phospho-alpha-D-ribose 1-diphosphate biosynthesis; 5-phospho-alpha-D-ribose 1-diphosphate from D-ribose 5-phosphate (route I): step 1/1. In Dictyostelium discoideum (Social amoeba), this protein is Ribose-phosphate pyrophosphokinase B (prsB).